The primary structure comprises 131 residues: Small ribosomal subunit protein uS11 (131 aa).

It belongs to the universal ribosomal protein uS11 family. In terms of assembly, part of the 30S ribosomal subunit. Interacts with proteins S7 and S18. Binds to IF-3.

Functionally, located on the platform of the 30S subunit, it bridges several disparate RNA helices of the 16S rRNA. Forms part of the Shine-Dalgarno cleft in the 70S ribosome. The sequence is that of Small ribosomal subunit protein uS11 from Clostridium novyi (strain NT).